The following is a 62-amino-acid chain: Photosystem II reaction center protein Z (62 aa).

A run of 2 helical transmembrane segments spans residues 8–28 and 41–61; these read TLFALIAVSFLLVIGVPVVFA and FSGVGIWFLLVFAVGILNSFV.

This sequence belongs to the PsbZ family. PSII is composed of 1 copy each of membrane proteins PsbA, PsbB, PsbC, PsbD, PsbE, PsbF, PsbH, PsbI, PsbJ, PsbK, PsbL, PsbM, PsbT, PsbY, PsbZ, Psb30/Ycf12, at least 3 peripheral proteins of the oxygen-evolving complex and a large number of cofactors. It forms dimeric complexes.

Its subcellular location is the plastid. It is found in the chloroplast thylakoid membrane. Its function is as follows. May control the interaction of photosystem II (PSII) cores with the light-harvesting antenna, regulates electron flow through the 2 photosystem reaction centers. PSII is a light-driven water plastoquinone oxidoreductase, using light energy to abstract electrons from H(2)O, generating a proton gradient subsequently used for ATP formation. The chain is Photosystem II reaction center protein Z from Oltmannsiellopsis viridis (Marine flagellate).